The following is a 302-amino-acid chain: Pantothenate synthetase 4 (302 aa).

Residue Met51 to His58 participates in ATP binding. The Proton donor role is filled by His58. Gln82 contacts (R)-pantoate. Gln82 contributes to the beta-alanine binding site. Gly166–Asp169 is a binding site for ATP. Gln172 lines the (R)-pantoate pocket. ATP is bound by residues Ala195 and Arg203–Arg206.

The protein belongs to the pantothenate synthetase family. In terms of assembly, homodimer.

It localises to the cytoplasm. It catalyses the reaction (R)-pantoate + beta-alanine + ATP = (R)-pantothenate + AMP + diphosphate + H(+). It functions in the pathway cofactor biosynthesis; (R)-pantothenate biosynthesis; (R)-pantothenate from (R)-pantoate and beta-alanine: step 1/1. Functionally, catalyzes the condensation of pantoate with beta-alanine in an ATP-dependent reaction via a pantoyl-adenylate intermediate. In Frankia alni (strain DSM 45986 / CECT 9034 / ACN14a), this protein is Pantothenate synthetase 4.